Reading from the N-terminus, the 180-residue chain is Large ribosomal subunit protein uL6 (180 aa).

Belongs to the universal ribosomal protein uL6 family. As to quaternary structure, part of the 50S ribosomal subunit.

This protein binds to the 23S rRNA, and is important in its secondary structure. It is located near the subunit interface in the base of the L7/L12 stalk, and near the tRNA binding site of the peptidyltransferase center. The chain is Large ribosomal subunit protein uL6 from Protochlamydia amoebophila (strain UWE25).